A 390-amino-acid chain; its full sequence is Acetylornithine aminotransferase (390 aa).

Pyridoxal 5'-phosphate-binding positions include 105 to 106 (GA) and F132. R135 provides a ligand contact to N(2)-acetyl-L-ornithine. Pyridoxal 5'-phosphate is bound at residue 217–220 (DEVQ). An N6-(pyridoxal phosphate)lysine modification is found at K246. Residue S274 coordinates N(2)-acetyl-L-ornithine. Residue T275 coordinates pyridoxal 5'-phosphate.

The protein belongs to the class-III pyridoxal-phosphate-dependent aminotransferase family. ArgD subfamily. In terms of assembly, homodimer. It depends on pyridoxal 5'-phosphate as a cofactor.

It is found in the cytoplasm. The catalysed reaction is N(2)-acetyl-L-ornithine + 2-oxoglutarate = N-acetyl-L-glutamate 5-semialdehyde + L-glutamate. It functions in the pathway amino-acid biosynthesis; L-arginine biosynthesis; N(2)-acetyl-L-ornithine from L-glutamate: step 4/4. This Methanothermobacter thermautotrophicus (strain ATCC 29096 / DSM 1053 / JCM 10044 / NBRC 100330 / Delta H) (Methanobacterium thermoautotrophicum) protein is Acetylornithine aminotransferase.